The primary structure comprises 233 residues: uncharacterized protein (233 aa).

Residues 21-43 (RWRTATSADHPRRGRPAAQAVRR) form a disordered region.

This is an uncharacterized protein from Mycobacterium tuberculosis (strain CDC 1551 / Oshkosh).